The sequence spans 463 residues: Glutamate--tRNA ligase 2 (463 aa).

Positions 11–21 match the 'HIGH' region motif; sequence PSPTGYLHIGG. Residues 240 to 244 carry the 'KMSKS' region motif; that stretch reads KLSKR. Residue Lys-243 participates in ATP binding.

This sequence belongs to the class-I aminoacyl-tRNA synthetase family. Glutamate--tRNA ligase type 1 subfamily. Monomer.

Its subcellular location is the cytoplasm. The enzyme catalyses tRNA(Glu) + L-glutamate + ATP = L-glutamyl-tRNA(Glu) + AMP + diphosphate. Catalyzes the attachment of glutamate to tRNA(Glu) in a two-step reaction: glutamate is first activated by ATP to form Glu-AMP and then transferred to the acceptor end of tRNA(Glu). The sequence is that of Glutamate--tRNA ligase 2 from Campylobacter jejuni subsp. jejuni serotype O:2 (strain ATCC 700819 / NCTC 11168).